Consider the following 153-residue polypeptide: Ribosome maturation factor RimP (153 aa).

This sequence belongs to the RimP family.

It is found in the cytoplasm. Required for maturation of 30S ribosomal subunits. In Clostridium botulinum (strain Loch Maree / Type A3), this protein is Ribosome maturation factor RimP.